Consider the following 155-residue polypeptide: Ribosomal RNA large subunit methyltransferase H (155 aa).

S-adenosyl-L-methionine-binding positions include L72, G103, and 122–127 (LSPLTL).

It belongs to the RNA methyltransferase RlmH family. Homodimer.

It localises to the cytoplasm. The catalysed reaction is pseudouridine(1915) in 23S rRNA + S-adenosyl-L-methionine = N(3)-methylpseudouridine(1915) in 23S rRNA + S-adenosyl-L-homocysteine + H(+). In terms of biological role, specifically methylates the pseudouridine at position 1915 (m3Psi1915) in 23S rRNA. This Mannheimia succiniciproducens (strain KCTC 0769BP / MBEL55E) protein is Ribosomal RNA large subunit methyltransferase H.